A 905-amino-acid polypeptide reads, in one-letter code: Translation initiation factor IF-2 (905 aa).

Disordered stretches follow at residues 52–84, 116–230, and 269–318; these read QSHGQKEKRRISLKSKTTSTARVTGSSGKSKSV, AKKR…QKKT, and FEKE…FEKP. The span at 65–84 shows a compositional bias: polar residues; that stretch reads KSKTTSTARVTGSSGKSKSV. Positions 116–138 are enriched in basic and acidic residues; the sequence is AKKRAEEEAKKREQVKKEAEERQ. A compositionally biased stretch (low complexity) spans 165-178; it reads VVVKKGSKAAAAAK. Composition is skewed to basic and acidic residues over residues 190 to 230 and 269 to 278; these read PKVE…QKKT and FEKERREIKR. Residues 406–575 enclose the tr-type G domain; that stretch reads TRPPVVTIMG…NLQAELMELE (170 aa). The G1 stretch occupies residues 415 to 422; the sequence is GHVDHGKT. 415–422 provides a ligand contact to GTP; the sequence is GHVDHGKT. Positions 440 to 444 are G2; the sequence is GITQH. Positions 461–464 are G3; sequence DTPG. GTP-binding positions include 461 to 465 and 515 to 518; these read DTPGH and NKMD. The G4 stretch occupies residues 515–518; that stretch reads NKMD. The G5 stretch occupies residues 551–553; it reads SAK.

Belongs to the TRAFAC class translation factor GTPase superfamily. Classic translation factor GTPase family. IF-2 subfamily.

It localises to the cytoplasm. Functionally, one of the essential components for the initiation of protein synthesis. Protects formylmethionyl-tRNA from spontaneous hydrolysis and promotes its binding to the 30S ribosomal subunits. Also involved in the hydrolysis of GTP during the formation of the 70S ribosomal complex. The polypeptide is Translation initiation factor IF-2 (Psychrobacter sp. (strain PRwf-1)).